Reading from the N-terminus, the 337-residue chain is Probable E3 ubiquitin-protein ligase LUL1 (337 aa).

The N-myristoyl glycine moiety is linked to residue Gly2. Positions 139-255 (FTFDASMPGR…GEIKIEVVKQ (117 aa)) are DAR2 domain. The RING-type; atypical zinc finger occupies 285 to 324 (CVVCLSEPRDTTVLPCRHMCMCSGCAKALRFQTNLCPVCR).

The protein belongs to the RING-type zinc finger family. LOG2 subfamily. Post-translationally, myristoylated (in vitro).

It carries out the reaction S-ubiquitinyl-[E2 ubiquitin-conjugating enzyme]-L-cysteine + [acceptor protein]-L-lysine = [E2 ubiquitin-conjugating enzyme]-L-cysteine + N(6)-ubiquitinyl-[acceptor protein]-L-lysine.. The protein operates within protein modification; protein ubiquitination. In terms of biological role, acts as an E3 ubiquitin-protein ligase, or as part of E3 complex, which accepts ubiquitin from specific E2 ubiquitin-conjugating enzymes and then transfers it to substrates (in vitro). The polypeptide is Probable E3 ubiquitin-protein ligase LUL1 (LUL1) (Arabidopsis thaliana (Mouse-ear cress)).